Reading from the N-terminus, the 393-residue chain is tRNA(Met) cytidine acetate ligase (393 aa).

Residues G81, N142, and R167 each contribute to the ATP site.

This sequence belongs to the TmcAL family.

It localises to the cytoplasm. It carries out the reaction cytidine(34) in elongator tRNA(Met) + acetate + ATP = N(4)-acetylcytidine(34) in elongator tRNA(Met) + AMP + diphosphate. Its function is as follows. Catalyzes the formation of N(4)-acetylcytidine (ac(4)C) at the wobble position of elongator tRNA(Met), using acetate and ATP as substrates. First activates an acetate ion to form acetyladenylate (Ac-AMP) and then transfers the acetyl group to tRNA to form ac(4)C34. This Bacillus thuringiensis (strain Al Hakam) protein is tRNA(Met) cytidine acetate ligase.